The primary structure comprises 147 residues: 3-dehydroquinate dehydratase (147 aa).

Tyr-23 functions as the Proton acceptor in the catalytic mechanism. Residues Asn-74, His-80, and Asp-87 each contribute to the substrate site. The active-site Proton donor is His-100. Residues 101-102 (LS) and Arg-111 contribute to the substrate site.

It belongs to the type-II 3-dehydroquinase family. Homododecamer.

The catalysed reaction is 3-dehydroquinate = 3-dehydroshikimate + H2O. It participates in metabolic intermediate biosynthesis; chorismate biosynthesis; chorismate from D-erythrose 4-phosphate and phosphoenolpyruvate: step 3/7. Catalyzes a trans-dehydration via an enolate intermediate. This chain is 3-dehydroquinate dehydratase, found in Clostridium botulinum (strain ATCC 19397 / Type A).